The following is a 375-amino-acid chain: Terpene cyclase braA (375 aa).

Residues D116, N264, and S268 each contribute to the Mg(2+) site. Residues D116–D120 carry the D(D/E)XX(D/E) motif motif. An NSE motif motif is present at residues N264 to E272. A WxxxxxRY motif motif is present at residues W348–Y355. (2E,6E)-farnesyl diphosphate is bound by residues R354 and Y355.

This sequence belongs to the terpene synthase family. In terms of assembly, homodimer. Mg(2+) is required as a cofactor.

It catalyses the reaction (2E,6E)-farnesyl diphosphate + H2O = trichobrasilenol + diphosphate. It functions in the pathway secondary metabolite biosynthesis. Functionally, terpene cyclase; part of the gene cluster that mediates the biosynthesis of the brasilane terpene glycosides brasilane D and E. The biosynthesis starts with the activity of the terpene cyclase braA that converts farnesyl pyrophosphate into the sesquiterpene alcohol trichobrasilenol. Subsequently, trichobrasilenol is glycosylated by the O-glycosyltransferase braB putatively using UDP-GlcNAc as sugar donor to yield brasilane A. The latter then undergoes two rounds of oxidation performed by the cytochrome P450 monooxygenase braC. In the first round braC hydroxylates C-12 forming brasilane D, which serves as substrate in the second round to establish the epoxide at the bond between C-5 and C-10 and oxidize the alcohol at C-12 to an aldehyde leading to the final product brasilane E. This is Terpene cyclase braA from Annulohypoxylon truncatum (Hypoxylon truncatum).